The following is a 134-amino-acid chain: DNA-directed RNA polymerase subunit omega (134 aa).

Positions 77–108 (IDEPEPDPASLLAAGGNASASGDEEEDAPEAV) are disordered. Residues 85–97 (ASLLAAGGNASAS) are compositionally biased toward low complexity.

The protein belongs to the RNA polymerase subunit omega family. As to quaternary structure, the RNAP catalytic core consists of 2 alpha, 1 beta, 1 beta' and 1 omega subunit. When a sigma factor is associated with the core the holoenzyme is formed, which can initiate transcription.

The enzyme catalyses RNA(n) + a ribonucleoside 5'-triphosphate = RNA(n+1) + diphosphate. Functionally, promotes RNA polymerase assembly. Latches the N- and C-terminal regions of the beta' subunit thereby facilitating its interaction with the beta and alpha subunits. The polypeptide is DNA-directed RNA polymerase subunit omega (Rhizobium rhizogenes (strain K84 / ATCC BAA-868) (Agrobacterium radiobacter)).